We begin with the raw amino-acid sequence, 293 residues long: ADP-forming sulfoacetate-CoA ligase subunit SauD (293 aa).

Residues 17-20 (TGKE), Lys43, and 96-98 (IAD) contribute to the CoA site. Residue His251 is the Tele-phosphohistidine intermediate of the active site.

It belongs to the succinate/malate CoA ligase alpha subunit family. As to quaternary structure, forms a complex with SauC.

It catalyses the reaction sulfoacetate + ATP + CoA = sulfoacetyl-CoA + ADP + phosphate. Its function is as follows. Involved in the degradation of sulfoacetate. Catalyzes the CoA- and ATP-dependent conversion of sulfoacetate to sulfoacetyl-CoA and ADP. Cannot use other sulfonic and carboxylic acids, and shows only residual activity with 3-sulfopropanoate and malonic acid. In Bilophila wadsworthia (strain 3_1_6), this protein is ADP-forming sulfoacetate-CoA ligase subunit SauD.